The chain runs to 436 residues: Enolase (436 aa).

Residue Gln-167 participates in (2R)-2-phosphoglycerate binding. Glu-209 acts as the Proton donor in catalysis. Mg(2+)-binding residues include Asp-246, Glu-291, and Asp-318. (2R)-2-phosphoglycerate-binding residues include Lys-343, Arg-372, Ser-373, and Lys-394. The active-site Proton acceptor is the Lys-343.

It belongs to the enolase family. In terms of assembly, component of the RNA degradosome, a multiprotein complex involved in RNA processing and mRNA degradation. Mg(2+) is required as a cofactor.

It localises to the cytoplasm. It is found in the secreted. Its subcellular location is the cell surface. The enzyme catalyses (2R)-2-phosphoglycerate = phosphoenolpyruvate + H2O. The protein operates within carbohydrate degradation; glycolysis; pyruvate from D-glyceraldehyde 3-phosphate: step 4/5. Its function is as follows. Catalyzes the reversible conversion of 2-phosphoglycerate (2-PG) into phosphoenolpyruvate (PEP). It is essential for the degradation of carbohydrates via glycolysis. The sequence is that of Enolase from Haemophilus influenzae (strain PittEE).